The chain runs to 122 residues: Acidic phospholipase A2 homolog vipoxin A chain (122 aa).

Cystine bridges form between Cys-26-Cys-115, Cys-28-Cys-44, Cys-43-Cys-95, Cys-49-Cys-122, Cys-50-Cys-88, Cys-57-Cys-81, and Cys-75-Cys-86.

This sequence belongs to the phospholipase A2 family. Group II subfamily. D49 sub-subfamily. In terms of assembly, heterodimer of A and B (AC P14420) chains; non-covalently linked. The A chain (acidic) is non-toxic, and increases the toxicity of the B chain (basic). The A chain may act as factor stabilizing the complex structure and hence retaining its toxicity by preventing non-specific binding. Upon binding to the target membranes the A chain may dissociate. As to expression, expressed by the venom gland.

The protein resides in the secreted. Its function is as follows. Heterodimer: postsynaptic neurotoxin. Monomer: Acidic phospholipase A2 homolog that is non-toxic. In Vipera ammodytes meridionalis (Eastern sand viper), this protein is Acidic phospholipase A2 homolog vipoxin A chain.